The following is a 411-amino-acid chain: Lysosome-associated membrane glycoprotein 2 (411 aa).

Residues 1 to 26 (MRLLSPVTGSKLVLLFLFLGAVRSDA) form the signal peptide. Positions 27-188 (LKLNLTDSKG…SKHEQVCKED (162 aa)) are first lumenal domain. At 27 to 376 (LKLNLTDSKG…QDCSADEDNF (350 aa)) the chain is on the lumenal side. Cys-38 and Cys-75 are disulfide-bonded. 15 N-linked (GlcNAc...) asparagine glycosylation sites follow: Asn-46, Asn-57, Asn-71, Asn-97, Asn-109, Asn-117, Asn-175, Asn-223, Asn-230, Asn-243, Asn-261, Asn-276, Asn-308, Asn-318, and Asn-357. A disulfide bridge connects residues Cys-149 and Cys-185. The hinge stretch occupies residues 189–229 (KTATTVAPIIHTTVPSPTTTLTPTSIPVPTPTVGNYTISNG). The second lumenal domain stretch occupies residues 230–376 (NATCLLATMG…QDCSADEDNF (147 aa)). An intrachain disulfide couples Cys-233 to Cys-266. Residues Cys-332 and Cys-369 are joined by a disulfide bond. Residues 377 to 400 (LVPIAVGAALGGVLILVLLAYFIG) form a helical membrane-spanning segment. Residues 401–411 (LKRHHTGYEQF) are Cytoplasmic-facing. Positions 402–405 (KRHH) are important for binding and subsequent lysosomal degradation of target proteins.

The protein belongs to the LAMP family. In terms of assembly, monomer. Forms large homooligomers. Interacts (via its cytoplasmic region) with HSPA8; HSPA8 mediates recruitment of proteins with a KFERQ motif to the surface of the lysosome for chaperone-mediated autophagy. Interacts with HSP90 in the lysosome lumen; this enhances LAMP2 stability. Interacts with MLLT11. Interacts with ABCB9. Interacts with FURIN. Interacts with CT55; this interaction may be important for LAMP2 protein stability. Interacts with TMEM175; inhibiting the proton channel activity of TMEM175. Forms a ternary complex with RAB7A and RUFY4 (via RUN domain); the interaction with RAB7A is mediated by RUFY4 (via RUN and coiled coil domains). In terms of processing, extensively N-glycosylated. Contains a minor proportion of O-linked glycans. Contains sialylated glycans. In terms of tissue distribution, detected in liver, kidney, spleen and macrophages (at protein level).

It localises to the lysosome membrane. The protein localises to the endosome membrane. The protein resides in the cell membrane. Its subcellular location is the cytoplasmic vesicle. It is found in the autophagosome membrane. Functionally, lysosomal membrane glycoprotein which plays an important role in lysosome biogenesis, lysosomal pH regulation and autophagy. Acts as an important regulator of lysosomal lumen pH regulation by acting as a direct inhibitor of the proton channel TMEM175, facilitating lysosomal acidification for optimal hydrolase activity. Plays an important role in chaperone-mediated autophagy, a process that mediates lysosomal degradation of proteins in response to various stresses and as part of the normal turnover of proteins with a long biological half-live. Functions by binding target proteins, such as GAPDH, NLRP3 and MLLT11, and targeting them for lysosomal degradation. In the chaperone-mediated autophagy, acts downstream of chaperones, such as HSPA8/HSC70, which recognize and bind substrate proteins and mediate their recruitment to lysosomes, where target proteins bind LAMP2. Plays a role in lysosomal protein degradation in response to starvation. Required for the fusion of autophagosomes with lysosomes during autophagy. Cells that lack LAMP2 express normal levels of VAMP8, but fail to accumulate STX17 on autophagosomes, which is the most likely explanation for the lack of fusion between autophagosomes and lysosomes. Required for normal degradation of the contents of autophagosomes. Required for efficient MHC class II-mediated presentation of exogenous antigens via its function in lysosomal protein degradation; antigenic peptides generated by proteases in the endosomal/lysosomal compartment are captured by nascent MHC II subunits. Is not required for efficient MHC class II-mediated presentation of endogenous antigens. This chain is Lysosome-associated membrane glycoprotein 2 (Lamp2), found in Rattus norvegicus (Rat).